Here is a 132-residue protein sequence, read N- to C-terminus: Small ribosomal subunit protein uS19 (132 aa).

The protein belongs to the universal ribosomal protein uS19 family.

Functionally, protein S19 forms a complex with S13 that binds strongly to the 16S ribosomal RNA. This is Small ribosomal subunit protein uS19 (rps19) from Pyrococcus abyssi (strain GE5 / Orsay).